A 347-amino-acid chain; its full sequence is NADH-ubiquinone oxidoreductase chain 2 (347 aa).

Transmembrane regions (helical) follow at residues 13–33 (IVLG…WMGF), 59–79 (YFLT…INLV), 96–116 (IIMT…FWVP), 122–142 (ISLL…LSVL), 144–164 (VISP…SILI), 178–200 (ILAY…NPMM), 210–232 (LMTA…ALSH), 246–266 (IIML…KWMI), 276–296 (IILA…YMRL), and 326–346 (LPML…MILL).

Belongs to the complex I subunit 2 family. In terms of assembly, core subunit of respiratory chain NADH dehydrogenase (Complex I) which is composed of 45 different subunits. Interacts with TMEM242.

It is found in the mitochondrion inner membrane. It carries out the reaction a ubiquinone + NADH + 5 H(+)(in) = a ubiquinol + NAD(+) + 4 H(+)(out). Core subunit of the mitochondrial membrane respiratory chain NADH dehydrogenase (Complex I) which catalyzes electron transfer from NADH through the respiratory chain, using ubiquinone as an electron acceptor. Essential for the catalytic activity and assembly of complex I. The polypeptide is NADH-ubiquinone oxidoreductase chain 2 (Rhynchonycteris naso (Brazilian long-nosed bat)).